The chain runs to 673 residues: FLYWCH-type zinc finger-containing protein 1 (673 aa).

The disordered stretch occupies residues 1–62 (MPLPEPSEQD…SSTATLPNNT (62 aa)). Ser21 is subject to Phosphoserine. Over residues 47-62 (VASQETSSTATLPNNT) the composition is skewed to polar residues. FLYWCH-type zinc fingers lie at residues 92 to 150 (FLKT…DHCH) and 235 to 293 (FLKT…SHCH). A Glycyl lysine isopeptide (Lys-Gly) (interchain with G-Cter in SUMO2) cross-link involves residue Lys110. The segment covering 147–158 (DHCHPPEKEGLD) has biased composition (basic and acidic residues). The segment at 147 to 178 (DHCHPPEKEGLDRKKRHRGRPPSSALPEGAEV) is disordered. Phosphoserine occurs at positions 294 and 339. Residues 351–402 (LSRSKSKSKSKSRSKSKSKSRSRSRKRAKKQQESSQEPPEEDQDVDPRGPEF) are disordered. Residues 354 to 379 (SKSKSKSKSRSKSKSKSRSRSRKRAK) show a composition bias toward basic residues. 3 FLYWCH-type zinc fingers span residues 402-460 (FLKT…SHCH), 490-548 (FLKT…RHCH), and 581-639 (FLRT…SHCH). Positions 646 to 673 (LEALRQREKAPSAAKKKKKKKKKKKGIH) are disordered. Basic residues predominate over residues 659–673 (AKKKKKKKKKKKGIH). Residue Lys666 forms a Glycyl lysine isopeptide (Lys-Gly) (interchain with G-Cter in SUMO2) linkage.

In terms of assembly, interacts with CTNNB1 (when unphosphorylated), perhaps preventing interaction of CTNNB1 with TCF4, and thereby regulating transcription activation; phosphorylation of CTNNB1 may inhibit the interaction.

It is found in the nucleus. The protein resides in the chromosome. Its subcellular location is the centromere. Its function is as follows. Transcription cofactor. Negatively regulates transcription activation by catenin beta-1 CTNNB1, perhaps acting by competing with TCF4 for CTNNB1 binding. May play a role in DNA-damage response signaling. Binds specifically to DNA sequences at peri-centromeric chromatin loci. This chain is FLYWCH-type zinc finger-containing protein 1 (Flywch1), found in Mus musculus (Mouse).